Consider the following 345-residue polypeptide: Opioid-binding protein/cell adhesion molecule (345 aa).

A signal peptide spans 1–27 (MGVCGSLFQPWKCLVVVSLRLLFLVPT). Ig-like C2-type domains are found at residues 39–126 (PKAM…PKTS), 136–219 (PQIM…VKIT), and 223–310 (PPYI…ASIT). N-linked (GlcNAc...) asparagine glycosylation is found at asparagine 44, asparagine 70, and asparagine 140. An intrachain disulfide couples cysteine 57 to cysteine 115. 2 disulfides stabilise this stretch: cysteine 157-cysteine 202 and cysteine 244-cysteine 296. Asparagine 285, asparagine 293, and asparagine 306 each carry an N-linked (GlcNAc...) asparagine glycan. Asparagine 322 is lipidated: GPI-anchor amidated asparagine. Positions 323–345 (SASRALACLWLSGTLFAHFFIKF) are cleaved as a propeptide — removed in mature form.

It belongs to the immunoglobulin superfamily. IgLON family.

It is found in the cell membrane. Its function is as follows. Binds opioids in the presence of acidic lipids; probably involved in cell contact. This is Opioid-binding protein/cell adhesion molecule (OPCML) from Bos taurus (Bovine).